A 26-amino-acid polypeptide reads, in one-letter code: Coenzyme PQQ synthesis protein A (26 aa).

A cross-link (pyrroloquinoline quinone (Glu-Tyr)) is located at residues 16 to 20 (EINSY).

It belongs to the PqqA family.

Its pathway is cofactor biosynthesis; pyrroloquinoline quinone biosynthesis. Its function is as follows. Required for coenzyme pyrroloquinoline quinone (PQQ) biosynthesis. PQQ is probably formed by cross-linking a specific glutamate to a specific tyrosine residue and excising these residues from the peptide. This Gluconacetobacter diazotrophicus (strain ATCC 49037 / DSM 5601 / CCUG 37298 / CIP 103539 / LMG 7603 / PAl5) protein is Coenzyme PQQ synthesis protein A.